The primary structure comprises 1083 residues: Kinesin-like protein KIN-14R (1083 aa).

A coiled-coil region spans residues 264 to 418 (HDKYEKKIAE…NHIQETKGNI (155 aa)). A Kinesin motor domain is found at 417-739 (NIRVFCRCRP…LNFATRVRGV (323 aa)). An ATP-binding site is contributed by 500-507 (GQTGTGKT). 2 coiled-coil regions span residues 746 to 876 (KQVD…SEGS) and 905 to 947 (IKEL…MATT). The segment at 967-1083 (EDNFGNENME…RDSKKKIWSR (117 aa)) is disordered. Residues 971 to 985 (GNENMESNTNILRTS) show a composition bias toward polar residues. A compositionally biased stretch (basic and acidic residues) spans 1020-1032 (PQMKEKRIRKSDP). Residues 1044-1054 (RTASGSSSQVP) show a composition bias toward polar residues. The span at 1062 to 1083 (KREQQEVPVVKERDSKKKIWSR) shows a compositional bias: basic and acidic residues.

Belongs to the TRAFAC class myosin-kinesin ATPase superfamily. Kinesin family. KIN-14 subfamily.

The protein is Kinesin-like protein KIN-14R of Arabidopsis thaliana (Mouse-ear cress).